A 1353-amino-acid polypeptide reads, in one-letter code: Xanthine dehydrogenase 2 (1353 aa).

Positions 7–93 (MEAIMYVNGV…GMHVISIEGV (87 aa)) constitute a 2Fe-2S ferredoxin-type domain. Positions 45, 50, 53, 75, 115, 118, 151, and 153 each coordinate [2Fe-2S] cluster. Residues 249–434 (GGNEGITWYR…LSVFLPWTRP (186 aa)) enclose the FAD-binding PCMH-type domain. Residues 277–284 (LLVGNTEV), phenylalanine 357, 367–371 (CIGGN), aspartate 380, leucine 424, and lysine 442 each bind FAD. Residues glutamine 788 and phenylalanine 819 each contribute to the Mo-molybdopterin site. Positions 823 and 901 each coordinate substrate. A Mo-molybdopterin-binding site is contributed by arginine 933. Residues phenylalanine 935 and threonine 1031 each coordinate substrate. Alanine 1100 serves as a coordination point for Mo-molybdopterin. The active-site Proton acceptor is the glutamate 1289.

It belongs to the xanthine dehydrogenase family. As to quaternary structure, homodimer. [2Fe-2S] cluster serves as cofactor. It depends on FAD as a cofactor. The cofactor is Mo-molybdopterin. In terms of tissue distribution, expressed in roots, leaves, stems, flowers and siliques.

The catalysed reaction is xanthine + NAD(+) + H2O = urate + NADH + H(+). It catalyses the reaction hypoxanthine + NAD(+) + H2O = xanthine + NADH + H(+). Key enzyme involved in purine catabolism. Catalyzes the oxidation of hypoxanthine to xanthine and the oxidation of xanthine to urate. Regulates the level of ureides and plays a role during plant growth and development and senescence. The chain is Xanthine dehydrogenase 2 (XDH2) from Arabidopsis thaliana (Mouse-ear cress).